A 161-amino-acid polypeptide reads, in one-letter code: MATFEGRFTDAQGLRIAVVVARFNDLVTGKLLSGCLDCLHRHGVDVTPESSQLDVAWVPGSFELPVAAQNLARSGRYQVLITLGAVIRGDTPHFDVVVAEASKGIAAVARDTGVPVIFGVLTTDTMQQALERAGIKSNLGWSYGLQALEMGSLMHALESEA.

5-amino-6-(D-ribitylamino)uracil contacts are provided by residues Phe23, 61 to 63, and 85 to 87; these read SFE and AVI. A (2S)-2-hydroxy-3-oxobutyl phosphate-binding site is contributed by 90 to 91; the sequence is DT. His93 functions as the Proton donor in the catalytic mechanism. Phe118 contributes to the 5-amino-6-(D-ribitylamino)uracil binding site. Arg132 is a binding site for (2S)-2-hydroxy-3-oxobutyl phosphate.

It belongs to the DMRL synthase family.

It catalyses the reaction (2S)-2-hydroxy-3-oxobutyl phosphate + 5-amino-6-(D-ribitylamino)uracil = 6,7-dimethyl-8-(1-D-ribityl)lumazine + phosphate + 2 H2O + H(+). It functions in the pathway cofactor biosynthesis; riboflavin biosynthesis; riboflavin from 2-hydroxy-3-oxobutyl phosphate and 5-amino-6-(D-ribitylamino)uracil: step 1/2. Its function is as follows. Catalyzes the formation of 6,7-dimethyl-8-ribityllumazine by condensation of 5-amino-6-(D-ribitylamino)uracil with 3,4-dihydroxy-2-butanone 4-phosphate. This is the penultimate step in the biosynthesis of riboflavin. The sequence is that of 6,7-dimethyl-8-ribityllumazine synthase from Synechococcus sp. (strain WH7803).